Consider the following 541-residue polypeptide: DNA ligase 1 (541 aa).

Glu234 is an ATP binding site. Lys236 acts as the N6-AMP-lysine intermediate in catalysis. ATP is bound by residues Arg241, Arg256, Glu286, Phe325, Arg398, and Lys404.

This sequence belongs to the ATP-dependent DNA ligase family. Mg(2+) serves as cofactor.

The catalysed reaction is ATP + (deoxyribonucleotide)n-3'-hydroxyl + 5'-phospho-(deoxyribonucleotide)m = (deoxyribonucleotide)n+m + AMP + diphosphate.. Functionally, DNA ligase that seals nicks in double-stranded DNA during DNA replication, DNA recombination and DNA repair. In Korarchaeum cryptofilum (strain OPF8), this protein is DNA ligase 1.